A 185-amino-acid chain; its full sequence is Large ribosomal subunit protein uL30 (185 aa).

This sequence belongs to the universal ribosomal protein uL30 family. In terms of assembly, part of the 50S ribosomal subunit.

The chain is Large ribosomal subunit protein uL30 from Caldivirga maquilingensis (strain ATCC 700844 / DSM 13496 / JCM 10307 / IC-167).